Here is a 277-residue protein sequence, read N- to C-terminus: Large ribosomal subunit protein uL2 (277 aa).

A disordered region spans residues 223 to 261; it reads SVMNPNDHPHGGGEGKSPVGRPSPVTPWGKPALGYKTRK.

Belongs to the universal ribosomal protein uL2 family. Part of the 50S ribosomal subunit. Forms a bridge to the 30S subunit in the 70S ribosome.

Its function is as follows. One of the primary rRNA binding proteins. Required for association of the 30S and 50S subunits to form the 70S ribosome, for tRNA binding and peptide bond formation. It has been suggested to have peptidyltransferase activity; this is somewhat controversial. Makes several contacts with the 16S rRNA in the 70S ribosome. The chain is Large ribosomal subunit protein uL2 from Clostridium botulinum (strain Alaska E43 / Type E3).